A 564-amino-acid chain; its full sequence is MVFVISVILAIIVILTIGLILRKRIYDKVDHQEKWKMDIMARDVAQQISKIKSLNLSGETQEKFELWKGRWEHIITKELPDIEDHLFDAEDAADKFRMKRANNILTEGDQKLQNIEVKIEEILEELDELLSSEKTSREEVAQIVPTIKLLRKTLSQSRYQYGKAEKFFDKKLDEFDTQLATYEDNVESGDYLEANRLIQVLKEEIAEFEIKMEQFPEILRRCKQDLPSQLEQVLAGLQEMKNDGYRVKHFGFDKEIITYQDQLKNLQQQIEQGDITDVSTKLDEIEERITEMYESLEGEAIAKNYLEQRIPEYEKSISEIAATYDDTKLEVEELQKAYFVENNDMERFFTIGKTISTLREQLKELHKEMDDDQKSHSDLQNIVEDGFDKIEQLEEQHEEFKKSIENLRKDEMEAREKLIEMRRQLYELNRKIKKSNIPGVPGFIWTRFETASAKNSQVVDVLEDYPLDIAKVQHALSEAKQAVDQTHEQIDIMLDQAYLTEQVIQYANRYRSQQPDLNGKLKEAERLFRNYEYELSLEHAAKAIEEIEPGALKRIEENQLTLNR.

The Extracellular segment spans residues 1–2 (MV). A helical transmembrane segment spans residues 3 to 21 (FVISVILAIIVILTIGLIL). Over 22-564 (RKRIYDKVDH…IEENQLTLNR (543 aa)) the chain is Cytoplasmic. 4 coiled-coil regions span residues 101–140 (ANNI…REEV), 168–215 (FDKK…MEQF), 251–436 (GFDK…KKSN), and 468–537 (DIAK…ELSL).

Belongs to the EzrA family.

The protein resides in the cell membrane. Functionally, negative regulator of FtsZ ring formation; modulates the frequency and position of FtsZ ring formation. Inhibits FtsZ ring formation at polar sites. Interacts either with FtsZ or with one of its binding partners to promote depolymerization. This Oceanobacillus iheyensis (strain DSM 14371 / CIP 107618 / JCM 11309 / KCTC 3954 / HTE831) protein is Septation ring formation regulator EzrA.